A 478-amino-acid chain; its full sequence is Ribulose bisphosphate carboxylase large chain (478 aa).

The propeptide occupies 1-2 (MS). Proline 3 carries the post-translational modification N-acetylproline. Lysine 14 is subject to N6,N6,N6-trimethyllysine. Substrate contacts are provided by asparagine 123 and threonine 173. Lysine 175 serves as the catalytic Proton acceptor. Position 177 (lysine 177) interacts with substrate. Positions 201, 203, and 204 each coordinate Mg(2+). Position 201 is an N6-carboxylysine (lysine 201). Histidine 294 acts as the Proton acceptor in catalysis. 3 residues coordinate substrate: arginine 295, histidine 327, and serine 379.

Belongs to the RuBisCO large chain family. Type I subfamily. Heterohexadecamer of 8 large chains and 8 small chains; disulfide-linked. The disulfide link is formed within the large subunit homodimers. The cofactor is Mg(2+). Post-translationally, the disulfide bond which can form in the large chain dimeric partners within the hexadecamer appears to be associated with oxidative stress and protein turnover.

Its subcellular location is the plastid. The protein localises to the chloroplast. The enzyme catalyses 2 (2R)-3-phosphoglycerate + 2 H(+) = D-ribulose 1,5-bisphosphate + CO2 + H2O. It catalyses the reaction D-ribulose 1,5-bisphosphate + O2 = 2-phosphoglycolate + (2R)-3-phosphoglycerate + 2 H(+). Its function is as follows. RuBisCO catalyzes two reactions: the carboxylation of D-ribulose 1,5-bisphosphate, the primary event in carbon dioxide fixation, as well as the oxidative fragmentation of the pentose substrate in the photorespiration process. Both reactions occur simultaneously and in competition at the same active site. The sequence is that of Ribulose bisphosphate carboxylase large chain from Drimys granadensis.